The chain runs to 114 residues: NADH-ubiquinone oxidoreductase chain 3 (114 aa).

The next 3 helical transmembrane spans lie at 4–24 (LVYIVFTIVLTVGLILVSYLL), 55–75 (FYLIAILFIIFDLEVVFILPF), and 82–102 (VSLLGGWITIIFLVILTIGFI).

The protein belongs to the complex I subunit 3 family.

The protein localises to the mitochondrion membrane. It catalyses the reaction a ubiquinone + NADH + 5 H(+)(in) = a ubiquinol + NAD(+) + 4 H(+)(out). In terms of biological role, core subunit of the mitochondrial membrane respiratory chain NADH dehydrogenase (Complex I) that is believed to belong to the minimal assembly required for catalysis. Complex I functions in the transfer of electrons from NADH to the respiratory chain. The immediate electron acceptor for the enzyme is believed to be ubiquinone. The polypeptide is NADH-ubiquinone oxidoreductase chain 3 (ND3) (Allomyces macrogynus).